The primary structure comprises 475 residues: UDP-N-acetylmuramate--L-alanine ligase (475 aa).

Residue 119–125 (GTHGKTT) coordinates ATP.

Belongs to the MurCDEF family.

The protein localises to the cytoplasm. It carries out the reaction UDP-N-acetyl-alpha-D-muramate + L-alanine + ATP = UDP-N-acetyl-alpha-D-muramoyl-L-alanine + ADP + phosphate + H(+). The protein operates within cell wall biogenesis; peptidoglycan biosynthesis. In terms of biological role, cell wall formation. This is UDP-N-acetylmuramate--L-alanine ligase from Wigglesworthia glossinidia brevipalpis.